We begin with the raw amino-acid sequence, 463 residues long: Formate-nitrite transporter 2 (463 aa).

At 1–100 (MCSIPPLRLL…VKKTQLRIDR (100 aa)) the chain is on the cytoplasmic side. A helical membrane pass occupies residues 101-121 (LLLQAFMAGIFVAMAGHCCTV). At 122–142 (LAGSYPTDPGDPLAVAKPTQK) the chain is on the extracellular side. Residues 143–163 (FIYGALFPVAFICIILTGAEL) form a helical membrane-spanning segment. At 164-189 (FTGNTMTMLICYFQKRVTMLQLGVNW) the chain is on the cytoplasmic side. The chain crosses the membrane as a helical span at residues 190-210 (LGSLAGNWLGALFGAYFLSYL). The Extracellular segment spans residues 211–237 (TGALGDEHVRQFLFRTCVNKISYGWGE). Residues 238-258 (CFLRGVGCNTFVCLAVWAVIA) form a helical membrane-spanning segment. At 259–265 (SENVAGK) the chain is on the cytoplasmic side. Residues 266 to 286 (VLVMWFPIVAFCVGGYEHIIA) traverse the membrane as a helical segment. Topologically, residues 287-305 (NMYTLQAGLMAGAPVAILD) are extracellular. A helical membrane pass occupies residues 306–326 (VIAFNFLPTLLGNIVGGCLLV). Residues 327–463 (GAVYAYNFYP…QTAESVAQQV (137 aa)) lie on the Cytoplasmic side of the membrane. A disordered region spans residues 424–463 (SGNLSTHARLDLPNRPVEPPSDGLEVTPQSQTAESVAQQV). Residues 450 to 463 (TPQSQTAESVAQQV) are compositionally biased toward polar residues.

It belongs to the FNT transporter (TC 1.A.16) family. In terms of assembly, homopentamer.

Its subcellular location is the cell membrane. It carries out the reaction (S)-lactate(in) + H(+)(in) = (S)-lactate(out) + H(+)(out). The enzyme catalyses formate(in) + H(+)(in) = formate(out) + H(+)(out). The catalysed reaction is pyruvate(out) + H(+)(out) = pyruvate(in) + H(+)(in). It catalyses the reaction acetate(out) + H(+)(out) = acetate(in) + H(+)(in). Inhibited by p-chloromercuribenzene sulfonate (pCMBS). Methyl methanethiosulfonate (MMTS) inhibits L-lactate but not formate transport. Inhibited by the Malaria Box compound MMV007839. Inhibited by BH-296, BH-317, BH-326 and BH-388 compounds. In terms of biological role, monocarboxylate-proton symporter; active in acidic-to-neutral pH range. Transports L-lactate and formate. The polypeptide is Formate-nitrite transporter 2 (Toxoplasma gondii (strain ATCC 50611 / Me49)).